The following is a 236-amino-acid chain: Glucosamine-6-phosphate deaminase (236 aa).

Residue D67 is the Proton acceptor; for enolization step of the active site. Catalysis depends on N136, which acts as the For ring-opening step. H138 functions as the Proton acceptor; for ring-opening step in the catalytic mechanism. Residue E143 is the For ring-opening step of the active site.

It belongs to the glucosamine/galactosamine-6-phosphate isomerase family. NagB subfamily.

It catalyses the reaction alpha-D-glucosamine 6-phosphate + H2O = beta-D-fructose 6-phosphate + NH4(+). Its pathway is amino-sugar metabolism; N-acetylneuraminate degradation; D-fructose 6-phosphate from N-acetylneuraminate: step 5/5. In terms of biological role, catalyzes the reversible isomerization-deamination of glucosamine 6-phosphate (GlcN6P) to form fructose 6-phosphate (Fru6P) and ammonium ion. In Lachnoclostridium phytofermentans (strain ATCC 700394 / DSM 18823 / ISDg) (Clostridium phytofermentans), this protein is Glucosamine-6-phosphate deaminase.